Here is a 305-residue protein sequence, read N- to C-terminus: Pseudouridine-5'-phosphate glycosidase (305 aa).

Glutamate 30 acts as the Proton donor in catalysis. The substrate site is built by lysine 91 and valine 111. Aspartate 143 is a binding site for Mn(2+). Position 145–147 (145–147) interacts with substrate; it reads SAD. Lysine 164 functions as the Nucleophile in the catalytic mechanism.

It belongs to the pseudouridine-5'-phosphate glycosidase family. In terms of assembly, homotrimer. Mn(2+) is required as a cofactor.

The enzyme catalyses D-ribose 5-phosphate + uracil = psi-UMP + H2O. Functionally, catalyzes the reversible cleavage of pseudouridine 5'-phosphate (PsiMP) to ribose 5-phosphate and uracil. Functions biologically in the cleavage direction, as part of a pseudouridine degradation pathway. This chain is Pseudouridine-5'-phosphate glycosidase, found in Mesorhizobium japonicum (strain LMG 29417 / CECT 9101 / MAFF 303099) (Mesorhizobium loti (strain MAFF 303099)).